The sequence spans 180 residues: Virion protein US10 homolog (180 aa).

This sequence belongs to the herpesviridae US10 family. Phosphorylated.

The protein localises to the virion tegument. The protein resides in the host nucleus matrix. This chain is Virion protein US10 homolog (64), found in Varicella-zoster virus (strain Dumas) (HHV-3).